The following is an 884-amino-acid chain: Valine--tRNA ligase (884 aa).

A 'HIGH' region motif is present at residues 46–56 (PNVTGKLHLGH). A 'KMSKS' region motif is present at residues 520 to 524 (KMSKS). Lysine 523 contacts ATP. Positions 809 to 844 (LADLLNVEEELARLEKELAKWQKELNMVGKKLSNER) form a coiled coil.

This sequence belongs to the class-I aminoacyl-tRNA synthetase family. ValS type 1 subfamily. As to quaternary structure, monomer.

It localises to the cytoplasm. It catalyses the reaction tRNA(Val) + L-valine + ATP = L-valyl-tRNA(Val) + AMP + diphosphate. Its function is as follows. Catalyzes the attachment of valine to tRNA(Val). As ValRS can inadvertently accommodate and process structurally similar amino acids such as threonine, to avoid such errors, it has a 'posttransfer' editing activity that hydrolyzes mischarged Thr-tRNA(Val) in a tRNA-dependent manner. This Streptococcus agalactiae serotype III (strain NEM316) protein is Valine--tRNA ligase.